The primary structure comprises 549 residues: MGNTCGVTLRSKYFASFRGASQRHDEAGYAPVATSAAAAAAADEPAGKKAPRGSAAAADAPHAASMKRGAPAPAELTANVLGHPTPSLSEHYALGRKLGQGQFGTTYLCTDLATGVDYACKSIAKRKLITKEDVEDVRREIQIMHHLAGHRNVVAIKGAYEDPQYVHIVMELCAGGELFDRIIERGQFSERKAAELTRIIVGVIEACHSLGVIHRDLKPENFLLANKDDDLSLKAIDFGLSVFFKPGQVFTDVVGSPYYVAPEVLRKCYGPEADVWTAGVILYILLSGVPPFWAETQQGIFDAVLKGVIDFDSDPWPVISDSAKDLIRRMLNPRPKERLTAHEVLCHPWICDHGVAPDRPLDPAVLSRIKQFSAMNKLKKMALRVIAESLSEEEIAGLKEMFKAMDTDNSGAITYDELKEGMRKYGSTLKDTEIRDLMEAADVDNSGTIDYIEFIAATLHLNKLEREEHLVAAFSYFDKDGSGYITVDELQQACKEHNMPDAFLDDVIKEADQDNDGRIDYGEFVAMMTKGNMGVGRRTMRNSLNISMR.

A lipid anchor (N-myristoyl glycine) is attached at Gly2. A disordered region spans residues Asp43 to Gly69. Over residues Arg52–Ala64 the composition is skewed to low complexity. Residues Tyr92–Ile350 enclose the Protein kinase domain. Residues Leu98–Thr106 and Lys121 contribute to the ATP site. Asp216 acts as the Proton acceptor in catalysis. Positions Ala356 to Ile386 are autoinhibitory domain. 4 consecutive EF-hand domains span residues Glu393–Thr428, Leu429–Leu464, Glu465–Pro500, and Asp501–Gly534. Ca(2+)-binding residues include Asp406, Asp408, Ser410, Glu417, Asp442, Asp444, Ser446, Thr448, Glu453, Asp478, Asp480, Ser482, Tyr484, Glu489, Asp512, Asp514, Asp516, Arg518, and Glu523.

Belongs to the protein kinase superfamily. Ser/Thr protein kinase family. CDPK subfamily.

It localises to the membrane. The enzyme catalyses L-seryl-[protein] + ATP = O-phospho-L-seryl-[protein] + ADP + H(+). It catalyses the reaction L-threonyl-[protein] + ATP = O-phospho-L-threonyl-[protein] + ADP + H(+). Its activity is regulated as follows. Activated by calcium. Autophosphorylation may play an important role in the regulation of the kinase activity. In terms of biological role, may play a role in signal transduction pathways that involve calcium as a second messenger. This Oryza sativa subsp. japonica (Rice) protein is Calcium-dependent protein kinase 5.